The chain runs to 217 residues: Ras-related protein RABA1g (217 aa).

20–27 (GDSGVGKS) provides a ligand contact to GTP. Residues 42 to 50 (SKSTIGVEF) carry the Effector region motif. Residues 68 to 72 (DTAGQ), 126 to 129 (NKAD), and 156 to 157 (SA) each bind GTP. 2 S-geranylgeranyl cysteine lipidation sites follow: C214 and C215.

It belongs to the small GTPase superfamily. Rab family.

It is found in the cell membrane. Its function is as follows. Intracellular vesicle trafficking and protein transport. This Arabidopsis thaliana (Mouse-ear cress) protein is Ras-related protein RABA1g (RABA1G).